Reading from the N-terminus, the 271-residue chain is Orotidine 5'-phosphate decarboxylase (271 aa).

Catalysis depends on lysine 95, which acts as the Proton donor.

The protein belongs to the OMP decarboxylase family. Type 2 subfamily.

The catalysed reaction is orotidine 5'-phosphate + H(+) = UMP + CO2. It participates in pyrimidine metabolism; UMP biosynthesis via de novo pathway; UMP from orotate: step 2/2. The sequence is that of Orotidine 5'-phosphate decarboxylase from Aromatoleum aromaticum (strain DSM 19018 / LMG 30748 / EbN1) (Azoarcus sp. (strain EbN1)).